Consider the following 230-residue polypeptide: Large ribosomal subunit protein uL1 (230 aa).

The protein belongs to the universal ribosomal protein uL1 family. In terms of assembly, part of the 50S ribosomal subunit.

Functionally, binds directly to 23S rRNA. The L1 stalk is quite mobile in the ribosome, and is involved in E site tRNA release. Protein L1 is also a translational repressor protein, it controls the translation of the L11 operon by binding to its mRNA. This is Large ribosomal subunit protein uL1 from Bacillus cereus (strain B4264).